A 229-amino-acid polypeptide reads, in one-letter code: 7-cyano-7-deazaguanine synthase (229 aa).

Residue 15–25 participates in ATP binding; it reads LSGGLDSTTCL. Zn(2+)-binding residues include cysteine 192, cysteine 202, cysteine 205, and cysteine 208.

The protein belongs to the QueC family. It depends on Zn(2+) as a cofactor.

It catalyses the reaction 7-carboxy-7-deazaguanine + NH4(+) + ATP = 7-cyano-7-deazaguanine + ADP + phosphate + H2O + H(+). It functions in the pathway purine metabolism; 7-cyano-7-deazaguanine biosynthesis. Its function is as follows. Catalyzes the ATP-dependent conversion of 7-carboxy-7-deazaguanine (CDG) to 7-cyano-7-deazaguanine (preQ(0)). This chain is 7-cyano-7-deazaguanine synthase, found in Acinetobacter baylyi (strain ATCC 33305 / BD413 / ADP1).